Here is a 669-residue protein sequence, read N- to C-terminus: L-type lectin-domain containing receptor kinase IV.4 (669 aa).

Positions 1 to 23 are cleaved as a signal peptide; the sequence is MFFIKLFTIFFLSFFWQSLKSSS. Residues 24-294 lie on the Extracellular side of the membrane; the sequence is QIIDFTYNGF…TRVYRFYKNW (271 aa). The interval 26–260 is legume-lectin like; it reads IDFTYNGFRP…SEIFVLGWSF (235 aa). N-linked (GlcNAc...) asparagine glycosylation is found at N58, N80, N127, N152, and N185. The helical transmembrane segment at 295 to 315 threads the bilayer; that stretch reads VPLISLLLIPFLLIIFLVRFI. At 316–669 the chain is on the cytoplasmic side; the sequence is MKRRRKFAEE…VAYSLLSSGR (354 aa). The Protein kinase domain maps to 350–627; it reads FKDKNILGSG…LQYLRGDAML (278 aa). ATP is bound by residues 356–364 and K379; that span reads LGSGGFGSV. D475 serves as the catalytic Proton acceptor.

In the C-terminal section; belongs to the protein kinase superfamily. Ser/Thr protein kinase family. This sequence in the N-terminal section; belongs to the leguminous lectin family.

The protein resides in the cell membrane. It carries out the reaction L-seryl-[protein] + ATP = O-phospho-L-seryl-[protein] + ADP + H(+). The enzyme catalyses L-threonyl-[protein] + ATP = O-phospho-L-threonyl-[protein] + ADP + H(+). Involved in resistance response to the pathogenic oomycetes Phytophthora infestans and Phytophthora capsici and to the pathogenic bacteria Pseudomonas syringae. The protein is L-type lectin-domain containing receptor kinase IV.4 of Arabidopsis thaliana (Mouse-ear cress).